Here is a 278-residue protein sequence, read N- to C-terminus: Tryptophan synthase alpha chain (278 aa).

Residues Glu50 and Asp61 each act as proton acceptor in the active site.

Belongs to the TrpA family. Tetramer of two alpha and two beta chains.

It catalyses the reaction (1S,2R)-1-C-(indol-3-yl)glycerol 3-phosphate + L-serine = D-glyceraldehyde 3-phosphate + L-tryptophan + H2O. It functions in the pathway amino-acid biosynthesis; L-tryptophan biosynthesis; L-tryptophan from chorismate: step 5/5. The alpha subunit is responsible for the aldol cleavage of indoleglycerol phosphate to indole and glyceraldehyde 3-phosphate. The chain is Tryptophan synthase alpha chain from Methylorubrum populi (strain ATCC BAA-705 / NCIMB 13946 / BJ001) (Methylobacterium populi).